The chain runs to 128 residues: Fluoride-specific ion channel FluC (128 aa).

A run of 4 helical transmembrane segments spans residues 4 to 24, 35 to 55, 67 to 87, and 99 to 119; these read VFLLIIGGAIGSALRFGVSTW, FGILSVNVIGSFLIGFCWSIA, FLFTGLFGGFTTFSSFALDTM, and LLNVLASNILGLIAVFLGIIL. 2 residues coordinate Na(+): glycine 74 and threonine 77.

The protein belongs to the fluoride channel Fluc/FEX (TC 1.A.43) family.

The protein resides in the cell inner membrane. The catalysed reaction is fluoride(in) = fluoride(out). Na(+) is not transported, but it plays an essential structural role and its presence is essential for fluoride channel function. In terms of biological role, fluoride-specific ion channel. Important for reducing fluoride concentration in the cell, thus reducing its toxicity. The polypeptide is Fluoride-specific ion channel FluC (Parabacteroides distasonis (strain ATCC 8503 / DSM 20701 / CIP 104284 / JCM 5825 / NCTC 11152)).